The primary structure comprises 449 residues: Na(+)/H(+) antiporter NhaA 2 (449 aa).

The next 11 membrane-spanning stretches (helical) occupy residues 32–52 (IEAT…TLSN), 87–107 (GLMT…VVLG), 114–134 (MVAL…GLYL), 145–165 (GWGV…ALLG), 174–194 (VFLL…VAVG), 202–222 (TALA…LLGV), 233–253 (AIIW…GVIL), 318–338 (WVAF…PITI), 347–367 (LAVM…FAWL), 382–402 (WGGL…ALFI), and 417–437 (LGIL…LCAL).

It belongs to the NhaA Na(+)/H(+) (TC 2.A.33) antiporter family.

It is found in the cell inner membrane. The enzyme catalyses Na(+)(in) + 2 H(+)(out) = Na(+)(out) + 2 H(+)(in). Functionally, na(+)/H(+) antiporter that extrudes sodium in exchange for external protons. The protein is Na(+)/H(+) antiporter NhaA 2 of Acidiphilium cryptum (strain JF-5).